A 728-amino-acid chain; its full sequence is Ribosome biogenesis protein bop1-A (728 aa).

The interval 1–114 (MKRGSQGEAG…ENDSSDEEDI (114 aa)) is disordered. Over residues 55 to 67 (SDDEEDHWSEEEE) the composition is skewed to acidic residues. Residues 68-77 (NPGKSPKEII) show a composition bias toward basic and acidic residues. WD repeat units lie at residues 393 to 432 (GHKDLVRCISVSPSGQWLVSGSDDCSVRFWEVSTGRCMKS), 434 to 474 (VLEG…RLLC), 514 to 556 (KHQK…SQNP), 559 to 597 (KNKGQVQKVLFHPTRPFFFVATQRYVRVYNLLKQELTKK), 600 to 639 (TNCKWVSSIAVHPAGDNLICGSYDSKLAWFDMDLSTKPYK), 643 to 682 (HHKKALRAVSFHKSYPLFASGSDDGSVIVCHGMVYNDLLQ), and 698 to 728 (HRDLGVLDVTFHPTQPWVFSSGADATIRLFT).

It belongs to the WD repeat BOP1/ERB1 family. As to quaternary structure, component of the PeBoW complex, composed of bop1, pes1 and wdr12. The complex is held together by bop1, which interacts with pes1 via its N-terminal domain and with wdr12 via a high-affinity interaction between the seven-bladed beta-propeller domains of the 2 proteins. The PeBoW complex associates with the 66S pre-ribosome.

It is found in the nucleus. It localises to the nucleolus. The protein resides in the nucleoplasm. Its function is as follows. Component of the PeBoW complex, which is required for maturation of 28S and 5.8S ribosomal RNAs and formation of the 60S ribosome. The sequence is that of Ribosome biogenesis protein bop1-A (bop1-a) from Xenopus laevis (African clawed frog).